The sequence spans 343 residues: TATA box-binding protein-like 2 (343 aa).

The interval 71-152 (PDEVTQENKD…SDSLSLASIT (82 aa)) is disordered. Residues 76-90 (QENKDQPVISKHETE) are compositionally biased toward basic and acidic residues. A compositionally biased stretch (low complexity) spans 94–127 (ESQSPQSRLPSPSEQDVGLGLNSSSLSNSHSQLH). Positions 143-152 (SDSLSLASIT) are enriched in polar residues.

The protein belongs to the TBP family. In terms of assembly, interacts with TAF3. Ubiquitously expressed in all tissues examined with highest levels in heart, lung, ovary, spleen and testes.

The protein resides in the cytoplasm. It localises to the nucleus. In terms of biological role, transcription factor required in complex with TAF3 for the differentiation of myoblasts into myocytes. The complex replaces TFIID at specific promoters at an early stage in the differentiation process. This is TATA box-binding protein-like 2 from Homo sapiens (Human).